The chain runs to 904 residues: HTH-type transcriptional regulator MalT (904 aa).

39–46 (CPAGYGKT) contributes to the ATP binding site. The HTH luxR-type domain occupies 832-897 (ELIRTSPLTQ…EAVQQAQQLL (66 aa)). A DNA-binding region (H-T-H motif) is located at residues 856 to 875 (NDQIAGELAVAATTIKTHIR).

Belongs to the MalT family. As to quaternary structure, monomer in solution. Oligomerizes to an active state in the presence of the positive effectors ATP and maltotriose.

With respect to regulation, activated by ATP and maltotriose, which are both required for DNA binding. Positively regulates the transcription of the maltose regulon whose gene products are responsible for uptake and catabolism of malto-oligosaccharides. Specifically binds to the promoter region of its target genes, recognizing a short DNA motif called the MalT box. The polypeptide is HTH-type transcriptional regulator MalT (Serratia proteamaculans (strain 568)).